Consider the following 149-residue polypeptide: NADH-quinone oxidoreductase subunit A (149 aa).

The next 3 membrane-spanning stretches (helical) occupy residues 16-36, 68-88, and 98-118; these read FGIF…GAWF, FYLV…LFAW, and LGFI…VYLV.

The protein belongs to the complex I subunit 3 family. As to quaternary structure, NDH-1 is composed of 13 different subunits. Subunits NuoA, H, J, K, L, M, N constitute the membrane sector of the complex.

Its subcellular location is the cell inner membrane. The catalysed reaction is a quinone + NADH + 5 H(+)(in) = a quinol + NAD(+) + 4 H(+)(out). Functionally, NDH-1 shuttles electrons from NADH, via FMN and iron-sulfur (Fe-S) centers, to quinones in the respiratory chain. The immediate electron acceptor for the enzyme in this species is believed to be ubiquinone. Couples the redox reaction to proton translocation (for every two electrons transferred, four hydrogen ions are translocated across the cytoplasmic membrane), and thus conserves the redox energy in a proton gradient. This is NADH-quinone oxidoreductase subunit A from Cronobacter sakazakii (strain ATCC BAA-894) (Enterobacter sakazakii).